Consider the following 264-residue polypeptide: MRALLGLLLVFGGCTFALYLLSTRLPLGPRLAAAGEPEGRSLWFPSDLAELRELSEVLREYRKEHQAYVFLLFCSAYLYKQGFAIPGSSFLNVLAGALFGPWLGLLLCCVLTSVGATGCYLLSSLFGKQLVISYFPDKVALLQKKVEENRNSLFFFLLFLRLFPMTPNWFLNLSAPILNIPIVQFFFSVLIGLIPYNFICVQTGSILSTLTSLDALFSWETVLKLLAIALVALVPGTLIKKFSQKRLALSETSDIGHPDRRKDA.

An N-terminal signal peptide occupies residues 1–17 (MRALLGLLLVFGGCTFA). The next 5 membrane-spanning stretches (helical) occupy residues 67–87 (AYVF…AIPG), 100–122 (GPWL…CYLL), 153–173 (LFFF…FLNL), 175–195 (APIL…GLIP), and 219–239 (WETV…GTLI). The tract at residues 96–207 (GALFGPWLGL…FICVQTGSIL (112 aa)) is VTT domain.

This sequence belongs to the TMEM41 family.

The protein localises to the membrane. The polypeptide is Transmembrane protein 41A (Tmem41a) (Mus musculus (Mouse)).